A 505-amino-acid chain; its full sequence is Cytochrome P450 2K6 (505 aa).

Residues 7-27 (FLLQGSPTGTILGALLLFLVI) form a helical membrane-spanning segment. C448 serves as a coordination point for heme.

This sequence belongs to the cytochrome P450 family. Heme serves as cofactor. In terms of tissue distribution, detected in liver and ovary.

The protein localises to the endoplasmic reticulum membrane. The protein resides in the microsome membrane. Functionally, metabolizes aflatoxin B1 (AFB1) to the cytotoxic derivative AFB1 exo-8,9-epoxide. Does not show activity towards lauric acid. This chain is Cytochrome P450 2K6, found in Danio rerio (Zebrafish).